Here is a 524-residue protein sequence, read N- to C-terminus: Leucine-rich repeat-containing protein 1 (524 aa).

17 LRR repeats span residues 11–34, 35–58, 60–81, 83–105, 107–126, 127–149, 150–172, 173–196, 198–218, 219–242, 244–264, 265–288, 290–310, 311–334, 336–356, 357–380, and 382–405; these read NRHVESIDKRHCSLVYVPEEIYRY, ARSLEELLLDANQLRELPEQFFQL, KLRKLGLSDNEIQRLPPEIANF, QLVELDVSRNEIPEIPESISFCK, LQVADFSGNPLTRLPESFPE, LQNLTCLSVNDISLQSLPENIGN, LYNLASLELRENLLTYLPDSLTQ, LRRLEELDLGNNEIYNLPESIGAL, HLKDLWLDGNQLSELPQEIGN, LKNLLCLDVSENRLERLPEEISGL, SLTDLVISQNLLETIPDGIGK, LKKLSILKVDQNRLTQLPEAVGEC, SLTELVLTENQLLTLPKSIGK, LKKLSNLNADRNKLVSLPKEIGGC, SLTVFCVRDNRLTRIPAEVSQ, ATELHVLDVAGNRLLHLPLSLTAL, and LKALWLSDNQSQPLLTFQTDTDYT. T480 is modified (phosphothreonine). The stretch at 484–512 forms a coiled coil; the sequence is GELKHMKKTVENLRNDMNAAKGLDSNKNE.

Interacts with DLG1 and DLG4. May form a complex with DLG1 and ERBIN, where interaction between LRRC1 and ERBIN is indirect. As to expression, expressed strongly in testis and placenta, followed by heart, lung, kidney, thyroid, trachea, colon, prostate and pancreas.

The protein localises to the cytoplasm. It is found in the membrane. This chain is Leucine-rich repeat-containing protein 1 (LRRC1), found in Homo sapiens (Human).